Consider the following 164-residue polypeptide: NADH-quinone oxidoreductase subunit B (164 aa).

The [4Fe-4S] cluster site is built by C38, C39, C104, and C133.

Belongs to the complex I 20 kDa subunit family. In terms of assembly, NDH-1 is composed of 14 different subunits. Subunits NuoB, C, D, E, F, and G constitute the peripheral sector of the complex. The cofactor is [4Fe-4S] cluster.

It is found in the cell inner membrane. It carries out the reaction a quinone + NADH + 5 H(+)(in) = a quinol + NAD(+) + 4 H(+)(out). In terms of biological role, NDH-1 shuttles electrons from NADH, via FMN and iron-sulfur (Fe-S) centers, to quinones in the respiratory chain. The immediate electron acceptor for the enzyme in this species is believed to be ubiquinone. Couples the redox reaction to proton translocation (for every two electrons transferred, four hydrogen ions are translocated across the cytoplasmic membrane), and thus conserves the redox energy in a proton gradient. The protein is NADH-quinone oxidoreductase subunit B of Protochlamydia amoebophila (strain UWE25).